Consider the following 272-residue polypeptide: Small ribosomal subunit protein mS23 (272 aa).

Residues 236–272 form a disordered region; it reads AGATGGAKEESDPAILPELEVAESTSESAQPAEIRTG.

The protein belongs to the mitochondrion-specific ribosomal protein mS23 family. As to quaternary structure, component of the mitochondrial small ribosomal subunit.

The protein localises to the mitochondrion. The sequence is that of Small ribosomal subunit protein mS23 (RSM25) from Coccidioides immitis (strain RS) (Valley fever fungus).